A 366-amino-acid polypeptide reads, in one-letter code: Beta sliding clamp (366 aa).

This sequence belongs to the beta sliding clamp family. Forms a ring-shaped head-to-tail homodimer around DNA which binds and tethers DNA polymerases and other proteins to the DNA. The DNA replisome complex has a single clamp-loading complex (3 tau and 1 each of delta, delta', psi and chi subunits) which binds 3 Pol III cores (1 core on the leading strand and 2 on the lagging strand) each with a beta sliding clamp dimer. Additional proteins in the replisome are other copies of gamma, psi and chi, Ssb, DNA helicase and RNA primase.

The protein localises to the cytoplasm. Functionally, confers DNA tethering and processivity to DNA polymerases and other proteins. Acts as a clamp, forming a ring around DNA (a reaction catalyzed by the clamp-loading complex) which diffuses in an ATP-independent manner freely and bidirectionally along dsDNA. Initially characterized for its ability to contact the catalytic subunit of DNA polymerase III (Pol III), a complex, multichain enzyme responsible for most of the replicative synthesis in bacteria; Pol III exhibits 3'-5' exonuclease proofreading activity. The beta chain is required for initiation of replication as well as for processivity of DNA replication. The chain is Beta sliding clamp (dnaN) from Chlamydia muridarum (strain MoPn / Nigg).